The primary structure comprises 517 residues: PSTB2-interacting protein 1 (517 aa).

In terms of assembly, interacts with PDR17/PSTB2 and SCS2.

Phosphatidic acid-binding protein involved in interorganelle phosphatidylserine (PtdSer) transport. Linkks a PtdSer donor membrane (via binding of SCS2 and phosphatidic acid present in the donor membrane) with an acceptor membrane (via its interaction with PDR17), forming a zone of apposition that facilitates PtdSer transfer. The protein is PSTB2-interacting protein 1 of Saccharomyces cerevisiae (strain ATCC 204508 / S288c) (Baker's yeast).